We begin with the raw amino-acid sequence, 740 residues long: Eukaryotic translation initiation factor 3 subunit B (740 aa).

Positions 1–10 (MAPSFDTLTE) are enriched in polar residues. The interval 1 to 22 (MAPSFDTLTEQDLHEEEEEEID) is disordered. Residues 13-22 (LHEEEEEEID) are compositionally biased toward acidic residues. The RRM domain occupies 40–126 (TFVVIDGLPV…HTLAVNKLMD (87 aa)). WD repeat units follow at residues 193 to 230 (AHWTQLFVQWSPKGTYLASVHPQGVQLWGGPAFSKQKQ), 232 to 289 (PHPF…RSFV), 302 to 343 (EPKK…LLGK), 513 to 556 (IEKK…EKPE), and 571 to 609 (VEHYGVTDIDWDPTGRYVVSSASVWTHSMENGYNIHTFA). The tract at residues 695 to 721 (DAYGVPEDVDSSKQAKDAPAVSEDQGE) is disordered.

It belongs to the eIF-3 subunit B family. As to quaternary structure, component of the eukaryotic translation initiation factor 3 (eIF-3) complex.

The protein resides in the cytoplasm. Its function is as follows. RNA-binding component of the eukaryotic translation initiation factor 3 (eIF-3) complex, which is involved in protein synthesis of a specialized repertoire of mRNAs and, together with other initiation factors, stimulates binding of mRNA and methionyl-tRNAi to the 40S ribosome. The eIF-3 complex specifically targets and initiates translation of a subset of mRNAs involved in cell proliferation. This chain is Eukaryotic translation initiation factor 3 subunit B (prt1), found in Aspergillus niger (strain ATCC MYA-4892 / CBS 513.88 / FGSC A1513).